A 252-amino-acid polypeptide reads, in one-letter code: MKTVTVKDLVIGTGAPKIIVSLMAKDIASVKSEALAYREADFDILEWRVDHYADLSNVESVMAAAKILRETMPEKPLLFTYRSAKEGGEQAISTEAYIALNRAAIDSGLVDMIDLELFTGDDQVKETVAYAHAHDVKVVMSNHDFHKTPEAEEIIARLRKMQSFDADIPKIALMPQSTSDVLTLLAATLEMQEQYADRPIITMSMAKTGVISRLAGEVFGSAATFGAVKKASAPGQISVNDLRTVLTILHQA.

3-dehydroquinate is bound by residues S21, 46–48 (EWR), and R82. Residue H143 is the Proton donor/acceptor of the active site. Residue K170 is the Schiff-base intermediate with substrate of the active site. 3-dehydroquinate-binding residues include R213, S232, and Q236.

Belongs to the type-I 3-dehydroquinase family. In terms of assembly, homodimer.

It carries out the reaction 3-dehydroquinate = 3-dehydroshikimate + H2O. It functions in the pathway metabolic intermediate biosynthesis; chorismate biosynthesis; chorismate from D-erythrose 4-phosphate and phosphoenolpyruvate: step 3/7. Involved in the third step of the chorismate pathway, which leads to the biosynthesis of aromatic amino acids. Catalyzes the cis-dehydration of 3-dehydroquinate (DHQ) and introduces the first double bond of the aromatic ring to yield 3-dehydroshikimate. The chain is 3-dehydroquinate dehydratase from Escherichia coli O6:K15:H31 (strain 536 / UPEC).